A 165-amino-acid chain; its full sequence is Lipoprotein signal peptidase (165 aa).

The next 3 helical transmembrane spans lie at 9–29, 65–85, and 97–119; these read PFLWISAVAFFTDLITKLAVV, WQKYFFILLALVVSFMILFFL, and TGYALMVGGALANAADRAYHGFV. Active-site residues include Asp121 and Asp139. A helical membrane pass occupies residues 134 to 154; sequence VFNIADVAICIGAGLLAIDAF.

The protein belongs to the peptidase A8 family.

It is found in the cell inner membrane. The enzyme catalyses Release of signal peptides from bacterial membrane prolipoproteins. Hydrolyzes -Xaa-Yaa-Zaa-|-(S,diacylglyceryl)Cys-, in which Xaa is hydrophobic (preferably Leu), and Yaa (Ala or Ser) and Zaa (Gly or Ala) have small, neutral side chains.. The protein operates within protein modification; lipoprotein biosynthesis (signal peptide cleavage). Functionally, this protein specifically catalyzes the removal of signal peptides from prolipoproteins. This chain is Lipoprotein signal peptidase, found in Histophilus somni (strain 129Pt) (Haemophilus somnus).